Reading from the N-terminus, the 274-residue chain is S-methyl-5'-thioadenosine phosphorylase (274 aa).

Phosphate-binding positions include Ser-20, 62-63 (RH), and 95-96 (SA). Residue Met-194 participates in substrate binding. Thr-195 lines the phosphate pocket. 218–220 (DYD) lines the substrate pocket.

This sequence belongs to the PNP/MTAP phosphorylase family. MTAP subfamily. In terms of assembly, homohexamer. Dimer of a homotrimer.

The catalysed reaction is S-methyl-5'-thioadenosine + phosphate = 5-(methylsulfanyl)-alpha-D-ribose 1-phosphate + adenine. It participates in amino-acid biosynthesis; L-methionine biosynthesis via salvage pathway; S-methyl-5-thio-alpha-D-ribose 1-phosphate from S-methyl-5'-thioadenosine (phosphorylase route): step 1/1. In terms of biological role, catalyzes the reversible phosphorylation of S-methyl-5'-thioadenosine (MTA) to adenine and 5-methylthioribose-1-phosphate. Involved in the breakdown of MTA, a major by-product of polyamine biosynthesis. Responsible for the first step in the methionine salvage pathway after MTA has been generated from S-adenosylmethionine. Has broad substrate specificity with 6-aminopurine nucleosides as preferred substrates. The protein is S-methyl-5'-thioadenosine phosphorylase of Hyperthermus butylicus (strain DSM 5456 / JCM 9403 / PLM1-5).